Reading from the N-terminus, the 120-residue chain is NAD(P)H-quinone oxidoreductase subunit 3, chloroplastic (120 aa).

Helical transmembrane passes span 9–29 (IFWA…LISG), 64–84 (MFAL…PWAM), and 88–108 (VLGV…IVGS).

This sequence belongs to the complex I subunit 3 family. NDH is composed of at least 16 different subunits, 5 of which are encoded in the nucleus.

The protein localises to the plastid. The protein resides in the chloroplast thylakoid membrane. It carries out the reaction a plastoquinone + NADH + (n+1) H(+)(in) = a plastoquinol + NAD(+) + n H(+)(out). The enzyme catalyses a plastoquinone + NADPH + (n+1) H(+)(in) = a plastoquinol + NADP(+) + n H(+)(out). In terms of biological role, NDH shuttles electrons from NAD(P)H:plastoquinone, via FMN and iron-sulfur (Fe-S) centers, to quinones in the photosynthetic chain and possibly in a chloroplast respiratory chain. The immediate electron acceptor for the enzyme in this species is believed to be plastoquinone. Couples the redox reaction to proton translocation, and thus conserves the redox energy in a proton gradient. This is NAD(P)H-quinone oxidoreductase subunit 3, chloroplastic from Gossypium barbadense (Sea Island cotton).